Consider the following 202-residue polypeptide: Dephospho-CoA kinase (202 aa).

The 199-residue stretch at 3 to 201 (AIGLTGGIGS…QRYLGFAAAA (199 aa)) folds into the DPCK domain. An ATP-binding site is contributed by 11–16 (GSGKTT).

It belongs to the CoaE family.

It is found in the cytoplasm. The catalysed reaction is 3'-dephospho-CoA + ATP = ADP + CoA + H(+). The protein operates within cofactor biosynthesis; coenzyme A biosynthesis; CoA from (R)-pantothenate: step 5/5. Functionally, catalyzes the phosphorylation of the 3'-hydroxyl group of dephosphocoenzyme A to form coenzyme A. This Burkholderia lata (strain ATCC 17760 / DSM 23089 / LMG 22485 / NCIMB 9086 / R18194 / 383) protein is Dephospho-CoA kinase.